The sequence spans 591 residues: Metalloendopeptidase OPG085 (591 aa).

His-41 is a Zn(2+) binding site. Glu-44 is an active-site residue. 2 residues coordinate Zn(2+): His-45 and Glu-112.

It belongs to the peptidase M44 family. Zn(2+) serves as cofactor. Post-translationally, undergoes proteolytic processing during the course of infection. May be cleaved into 46 kDa and 22 kDa products (Potential).

The protein localises to the virion. Probably involved in maturation of some viral proteins by processing them preferentially at Ala-Gly-|-Ser/Thr/Lys motifs. Does not seem to be responsible for the cleavage of major core proteins. This Homo sapiens (Human) protein is Metalloendopeptidase OPG085 (OPG085).